Reading from the N-terminus, the 186-residue chain is Holliday junction branch migration complex subunit RuvA (186 aa).

Positions 1 to 63 (MNDYINGFLY…DNHFKYYGFF (63 aa)) are domain I. The domain II stretch occupies residues 64–137 (NQLVRDLFEI…QKELFNNKIS (74 aa)). Position 137 (Ser-137) is a region of interest, flexible linker. The interval 137 to 186 (SEKKNKVITSLEKLGYKTKDIYKIIINVDEDLTIDELTKYVLEKLSYINN) is domain III.

The protein belongs to the RuvA family. In terms of assembly, homotetramer. Forms an RuvA(8)-RuvB(12)-Holliday junction (HJ) complex. HJ DNA is sandwiched between 2 RuvA tetramers; dsDNA enters through RuvA and exits via RuvB. An RuvB hexamer assembles on each DNA strand where it exits the tetramer. Each RuvB hexamer is contacted by two RuvA subunits (via domain III) on 2 adjacent RuvB subunits; this complex drives branch migration. In the full resolvosome a probable DNA-RuvA(4)-RuvB(12)-RuvC(2) complex forms which resolves the HJ.

The protein resides in the cytoplasm. Functionally, the RuvA-RuvB-RuvC complex processes Holliday junction (HJ) DNA during genetic recombination and DNA repair, while the RuvA-RuvB complex plays an important role in the rescue of blocked DNA replication forks via replication fork reversal (RFR). RuvA specifically binds to HJ cruciform DNA, conferring on it an open structure. The RuvB hexamer acts as an ATP-dependent pump, pulling dsDNA into and through the RuvAB complex. HJ branch migration allows RuvC to scan DNA until it finds its consensus sequence, where it cleaves and resolves the cruciform DNA. This is Holliday junction branch migration complex subunit RuvA from Mycoplasma capricolum subsp. capricolum (strain California kid / ATCC 27343 / NCTC 10154).